A 79-amino-acid polypeptide reads, in one-letter code: MGNIYTKDIKRIVKEIYNQYKDEIKDDYNTNKQIVVRYVDVKSKKVRNRIAGYLTRYYKIMKEKETSPTEEKEEISEEI.

Belongs to the eukaryotic ribosomal protein eS17 family.

This is Small ribosomal subunit protein eS17 from Saccharolobus islandicus (strain Y.N.15.51 / Yellowstone #2) (Sulfolobus islandicus).